A 173-amino-acid polypeptide reads, in one-letter code: NADH-ubiquinone oxidoreductase chain 6 (173 aa).

Transmembrane regions (helical) follow at residues 24–44 (MSIM…TGTM), 49–69 (WLSY…FIYI), 80–100 (IKIN…TLMY), and 139–159 (PTVI…LAVV).

The protein belongs to the complex I subunit 6 family.

It is found in the mitochondrion membrane. It carries out the reaction a ubiquinone + NADH + 5 H(+)(in) = a ubiquinol + NAD(+) + 4 H(+)(out). Core subunit of the mitochondrial membrane respiratory chain NADH dehydrogenase (Complex I) that is believed to belong to the minimal assembly required for catalysis. Complex I functions in the transfer of electrons from NADH to the respiratory chain. The immediate electron acceptor for the enzyme is believed to be ubiquinone. The polypeptide is NADH-ubiquinone oxidoreductase chain 6 (ND6) (Locusta migratoria (Migratory locust)).